The chain runs to 524 residues: Beta-glucosidase 22 (524 aa).

The signal sequence occupies residues Met1 to Ala24. Gln55 contributes to the a beta-D-glucoside binding site. A glycan (N-linked (GlcNAc...) asparagine) is linked at Asn61. Residues His158 and Asn203–Glu204 contribute to the a beta-D-glucoside site. Glu204 functions as the Proton donor in the catalytic mechanism. Cys223 and Cys230 are joined by a disulfide. Residues Tyr346, Glu418, Trp468, Glu475–Trp476, and Phe484 each bind a beta-D-glucoside. Glu418 acts as the Nucleophile in catalysis. Asn494 carries N-linked (GlcNAc...) asparagine glycosylation. The Prevents secretion from ER motif lies at Lys521–Leu524.

It belongs to the glycosyl hydrolase 1 family. As to quaternary structure, component of the PYK10 complex, at least composed of PYK10/BGLU23, BGLU21, BGLU22, JAL22, JAL23, PBP1/JAL30, PBP2/JAL31, JAL32, JAL33, JAL34, JAL35, GLL22 and GLL23. In terms of tissue distribution, expressed exclusively in roots.

The protein localises to the endoplasmic reticulum lumen. The enzyme catalyses Hydrolysis of terminal, non-reducing beta-D-glucosyl residues with release of beta-D-glucose.. With respect to regulation, activated upon binding to PBP1 or PBP2. Its function is as follows. Beta-D-glucosidase active on scopolin &gt;&gt; esculin &gt;&gt; 4-MU-glucoside. No activity with DIMBOA-glucoside, pNP-glucoside, oNP-glucoside and sinigrin as substrates. The sequence is that of Beta-glucosidase 22 from Arabidopsis thaliana (Mouse-ear cress).